We begin with the raw amino-acid sequence, 107 residues long: Large ribosomal subunit protein eL33A (107 aa).

At alanine 2 the chain carries N-acetylalanine; partial. Residue lysine 47 forms a Glycyl lysine isopeptide (Lys-Gly) (interchain with G-Cter in ubiquitin) linkage.

The protein belongs to the eukaryotic ribosomal protein eL33 family. In terms of assembly, component of the large ribosomal subunit (LSU). Mature yeast ribosomes consist of a small (40S) and a large (60S) subunit. The 40S small subunit contains 1 molecule of ribosomal RNA (18S rRNA) and 33 different proteins (encoded by 57 genes). The large 60S subunit contains 3 rRNA molecules (25S, 5.8S and 5S rRNA) and 46 different proteins (encoded by 81 genes). In terms of processing, N-terminally acetylated by acetyltransferase NatA.

The protein resides in the cytoplasm. Functionally, component of the ribosome, a large ribonucleoprotein complex responsible for the synthesis of proteins in the cell. The small ribosomal subunit (SSU) binds messenger RNAs (mRNAs) and translates the encoded message by selecting cognate aminoacyl-transfer RNA (tRNA) molecules. The large subunit (LSU) contains the ribosomal catalytic site termed the peptidyl transferase center (PTC), which catalyzes the formation of peptide bonds, thereby polymerizing the amino acids delivered by tRNAs into a polypeptide chain. The nascent polypeptides leave the ribosome through a tunnel in the LSU and interact with protein factors that function in enzymatic processing, targeting, and the membrane insertion of nascent chains at the exit of the ribosomal tunnel. This chain is Large ribosomal subunit protein eL33A, found in Saccharomyces cerevisiae (strain ATCC 204508 / S288c) (Baker's yeast).